Reading from the N-terminus, the 71-residue chain is MRGIILAQLLALAGSEKSQYEPFFSESKPYVYNYEGIILNGIPENGLARSGIKLNCKAEISGYAQRSYMLK.

Positions 1–15 are cleaved as a signal peptide; it reads MRGIILAQLLALAGS. The region spanning 24 to 71 is the Vitellogenin domain; sequence FSESKPYVYNYEGIILNGIPENGLARSGIKLNCKAEISGYAQRSYMLK.

As to expression, produced by the liver, secreted into the blood and then sequestered by receptor mediated endocytosis into growing oocytes, where it is generally cleaved, giving rise to the respective yolk components.

In terms of biological role, precursor of the major egg-yolk proteins that are sources of nutrients during early development of oviparous organisms. The polypeptide is Vitellogenin-B1 (Xenopus laevis (African clawed frog)).